The sequence spans 548 residues: Glucose-6-phosphate isomerase 1 (548 aa).

The Proton donor role is filled by Glu-353. Catalysis depends on residues His-384 and Lys-512.

This sequence belongs to the GPI family.

Its subcellular location is the cytoplasm. It carries out the reaction alpha-D-glucose 6-phosphate = beta-D-fructose 6-phosphate. The protein operates within carbohydrate biosynthesis; gluconeogenesis. It functions in the pathway carbohydrate degradation; glycolysis; D-glyceraldehyde 3-phosphate and glycerone phosphate from D-glucose: step 2/4. In terms of biological role, catalyzes the reversible isomerization of glucose-6-phosphate to fructose-6-phosphate. In Neisseria gonorrhoeae (strain ATCC 700825 / FA 1090), this protein is Glucose-6-phosphate isomerase 1.